Here is a 451-residue protein sequence, read N- to C-terminus: ATP synthase subunit beta (451 aa).

143–150 (GGAGVGKT) serves as a coordination point for ATP.

It belongs to the ATPase alpha/beta chains family. In terms of assembly, F-type ATPases have 2 components, CF(1) - the catalytic core - and CF(0) - the membrane proton channel. CF(1) has five subunits: alpha(3), beta(3), gamma(1), delta(1), epsilon(1). CF(0) has three main subunits: a(1), b(2) and c(9-12). The alpha and beta chains form an alternating ring which encloses part of the gamma chain. CF(1) is attached to CF(0) by a central stalk formed by the gamma and epsilon chains, while a peripheral stalk is formed by the delta and b chains.

The protein resides in the cell membrane. The enzyme catalyses ATP + H2O + 4 H(+)(in) = ADP + phosphate + 5 H(+)(out). Produces ATP from ADP in the presence of a proton gradient across the membrane. The catalytic sites are hosted primarily by the beta subunits. This Coprothermobacter proteolyticus (strain ATCC 35245 / DSM 5265 / OCM 4 / BT) protein is ATP synthase subunit beta.